The primary structure comprises 1439 residues: Histone-lysine N-methyltransferase NSD3 (1439 aa).

Residues 121-151 (PHEILEKPSPPQPPPPPSVPQTVIPKKTGSP) are disordered. The segment covering 128–139 (PSPPQPPPPPSV) has biased composition (pro residues). The residue at position 150 (Ser-150) is a Phosphoserine. The KIKL signature appears at 154-157 (KLKI). A disordered region spans residues 181–247 (QASEHTKSKH…PREEPVLKEA (67 aa)). The segment covering 187 to 201 (KSKHESRKEKRKKSN) has biased composition (basic residues). Basic and acidic residues predominate over residues 202–244 (RHESSRSEERRSHKIPKLEPEGQNRPNERVDTAPEKPREEPVL). Glycyl lysine isopeptide (Lys-Gly) (interchain with G-Cter in SUMO2) cross-links involve residues Lys-218 and Lys-245. The PWWP 1 domain occupies 270-333 (VGDLVWSKVG…EKRVREYKGH (64 aa)). 2 disordered regions span residues 344-367 (AKQASNHSEKQKIRKPRPQRERAQ) and 401-466 (EASS…PPPV). Composition is skewed to polar residues over residues 401–413 (EASSQAKKNVTSK) and 425–445 (VLNSQPEQTNAGEVASSQSST). Lys-413 participates in a covalent cross-link: Glycyl lysine isopeptide (Lys-Gly) (interchain with G-Cter in SUMO2). Ser-457 is subject to Phosphoserine. Glycyl lysine isopeptide (Lys-Gly) (interchain with G-Cter in SUMO2) cross-links involve residues Lys-502 and Lys-532. Residues 540–695 (QDRLIISSPS…VDSSLSRRGV (156 aa)) form a disordered region. Positions 546 to 568 (SSPSQRSEKPAQSASSPEATSGS) are enriched in polar residues. The segment covering 583–595 (TRSESEKSAEVVP) has biased composition (basic and acidic residues). Ser-585, Ser-587, and Ser-590 each carry phosphoserine. Lys-628 is covalently cross-linked (Glycyl lysine isopeptide (Lys-Gly) (interchain with G-Cter in SUMO2)). Polar residues predominate over residues 637–648 (STDVETASCTYR). Phosphoserine is present on Ser-655. The segment covering 670–691 (DSPSATADADASDAQSVDSSLS) has biased composition (low complexity). 3 consecutive PHD-type zinc fingers follow at residues 701–748 (DTVC…CETG), 749–805 (QHPC…CSME), and 862–955 (VGFC…CKAG). Lys-790 is subject to N6-acetyllysine. Residues 960–1025 (YKQIVWVKLG…QGRVFPYVEG (66 aa)) enclose the PWWP 2 domain. Residues 1036–1065 (INKTFKKALEEAAKRFQELKAQRESKEALE) are a coiled coil. The 51-residue stretch at 1096 to 1146 (SEIPRCNCKPGDENPCGLESQCLNRMSQYECHPQVCPAGDRCQNQCFTKRL) folds into the AWS domain. The SET domain occupies 1148 to 1265 (PDAEVIKTER…AGMELTFNYN (118 aa)). Lys-1154 is covalently cross-linked (Glycyl lysine isopeptide (Lys-Gly) (interchain with G-Cter in SUMO2)). Residues 1272 to 1288 (GRTVCHCGADNCSGFLG) enclose the Post-SET domain. The segment at 1323-1370 (EDYCFQCGDGGELVMCDKKDCPKAYHLLCLNLTQPPHGKWECPWHRCD) adopts a PHD-type 4; atypical zinc-finger fold.

Belongs to the class V-like SAM-binding methyltransferase superfamily. Histone-lysine methyltransferase family. SET2 subfamily. Interacts with BRD4. Interacts (via KIKL motif) with BRD3 (via NET domain).

It localises to the nucleus. It is found in the chromosome. The catalysed reaction is L-lysyl(4)-[histone H3] + 2 S-adenosyl-L-methionine = N(6),N(6)-dimethyl-L-lysyl(4)-[histone H3] + 2 S-adenosyl-L-homocysteine + 2 H(+). It catalyses the reaction L-lysyl(27)-[histone H3] + 2 S-adenosyl-L-methionine = N(6),N(6)-dimethyl-L-lysyl(27)-[histone H3] + 2 S-adenosyl-L-homocysteine + 2 H(+). Functionally, histone methyltransferase. Preferentially dimethylates 'Lys-4' and 'Lys-27' of histone H3 forming H3K4me2 and H3K27me2. H3 'Lys-4' methylation represents a specific tag for epigenetic transcriptional activation, while 'Lys-27' is a mark for transcriptional repression. The chain is Histone-lysine N-methyltransferase NSD3 (Nsd3) from Mus musculus (Mouse).